The primary structure comprises 135 residues: S-adenosylmethionine decarboxylase proenzyme (135 aa).

The Schiff-base intermediate with substrate; via pyruvic acid role is filled by Ser64. Position 64 is a pyruvic acid (Ser); by autocatalysis (Ser64). The active-site Proton acceptor; for processing activity is His69. The active-site Proton donor; for catalytic activity is Cys84.

This sequence belongs to the prokaryotic AdoMetDC family. Type 1 subfamily. Heterotetramer of two alpha and two beta chains arranged as a dimer of alpha/beta heterodimers. The cofactor is pyruvate. Is synthesized initially as an inactive proenzyme. Formation of the active enzyme involves a self-maturation process in which the active site pyruvoyl group is generated from an internal serine residue via an autocatalytic post-translational modification. Two non-identical subunits are generated from the proenzyme in this reaction, and the pyruvate is formed at the N-terminus of the alpha chain, which is derived from the carboxyl end of the proenzyme. The post-translation cleavage follows an unusual pathway, termed non-hydrolytic serinolysis, in which the side chain hydroxyl group of the serine supplies its oxygen atom to form the C-terminus of the beta chain, while the remainder of the serine residue undergoes an oxidative deamination to produce ammonia and the pyruvoyl group blocking the N-terminus of the alpha chain.

The catalysed reaction is S-adenosyl-L-methionine + H(+) = S-adenosyl 3-(methylsulfanyl)propylamine + CO2. It functions in the pathway amine and polyamine biosynthesis; S-adenosylmethioninamine biosynthesis; S-adenosylmethioninamine from S-adenosyl-L-methionine: step 1/1. Functionally, catalyzes the decarboxylation of S-adenosylmethionine to S-adenosylmethioninamine (dcAdoMet), the propylamine donor required for the synthesis of the polyamines spermine and spermidine from the diamine putrescine. The sequence is that of S-adenosylmethionine decarboxylase proenzyme from Aquifex aeolicus (strain VF5).